A 102-amino-acid polypeptide reads, in one-letter code: Small ribosomal subunit protein uS10 (102 aa).

The tract at residues 33 to 59 (RMSGPIPLPTKRIRITTRKSPDGEGSA) is disordered.

Belongs to the universal ribosomal protein uS10 family. Part of the 30S ribosomal subunit.

In terms of biological role, involved in the binding of tRNA to the ribosomes. In Pyrococcus furiosus (strain ATCC 43587 / DSM 3638 / JCM 8422 / Vc1), this protein is Small ribosomal subunit protein uS10.